A 152-amino-acid polypeptide reads, in one-letter code: Mediator of RNA polymerase II transcription subunit 9 (152 aa).

Residues 98–150 (IKRCKALLQENEEVRNLLANSIEEWENIIADKEQQLRVKAKVLRDLDARIEKI) are a coiled coil.

Belongs to the Mediator complex subunit 9 family. As to quaternary structure, component of the Mediator complex.

It localises to the nucleus. Component of the Mediator complex, a coactivator involved in the regulated transcription of nearly all RNA polymerase II-dependent genes. Mediator functions as a bridge to convey information from gene-specific regulatory proteins to the basal RNA polymerase II transcription machinery. Mediator is recruited to promoters by direct interactions with regulatory proteins and serves as a scaffold for the assembly of a functional preinitiation complex with RNA polymerase II and the general transcription factors. This Candida glabrata (strain ATCC 2001 / BCRC 20586 / JCM 3761 / NBRC 0622 / NRRL Y-65 / CBS 138) (Yeast) protein is Mediator of RNA polymerase II transcription subunit 9 (CSE2).